Consider the following 134-residue polypeptide: Fluoride-specific ion channel FluC 2 (134 aa).

Helical transmembrane passes span Ile8–Trp28, Ile40–Val60, Leu69–Leu89, and Leu99–Leu119. The Na(+) site is built by Gly75 and Thr78.

This sequence belongs to the fluoride channel Fluc/FEX (TC 1.A.43) family.

The protein resides in the cell membrane. It catalyses the reaction fluoride(in) = fluoride(out). With respect to regulation, na(+) is not transported, but it plays an essential structural role and its presence is essential for fluoride channel function. Fluoride-specific ion channel. Important for reducing fluoride concentration in the cell, thus reducing its toxicity. The sequence is that of Fluoride-specific ion channel FluC 2 from Halalkalibacterium halodurans (strain ATCC BAA-125 / DSM 18197 / FERM 7344 / JCM 9153 / C-125) (Bacillus halodurans).